The following is a 122-amino-acid chain: Large ribosomal subunit protein uL18 (122 aa).

Belongs to the universal ribosomal protein uL18 family. In terms of assembly, part of the 50S ribosomal subunit; part of the 5S rRNA/L5/L18/L25 subcomplex. Contacts the 5S and 23S rRNAs.

Its function is as follows. This is one of the proteins that bind and probably mediate the attachment of the 5S RNA into the large ribosomal subunit, where it forms part of the central protuberance. The protein is Large ribosomal subunit protein uL18 of Petrotoga mobilis (strain DSM 10674 / SJ95).